The primary structure comprises 415 residues: D-threonate kinase (415 aa).

Residues D9, R53, and 81–84 (KIDS) each bind substrate. ATP-binding positions include S251, 345–348 (GGET), and G392.

The protein belongs to the four-carbon acid sugar kinase family.

It catalyses the reaction D-threonate + ATP = 4-O-phospho-D-threonate + ADP + H(+). Its function is as follows. Catalyzes the ATP-dependent phosphorylation of D-threonate to D-threonate 4-phosphate. Can also phosphorylate 4-hydroxy-L-threonine, with lower efficiency. This chain is D-threonate kinase, found in Cupriavidus necator (strain ATCC 17699 / DSM 428 / KCTC 22496 / NCIMB 10442 / H16 / Stanier 337) (Ralstonia eutropha).